A 247-amino-acid chain; its full sequence is 2,3-bisphosphoglycerate-dependent phosphoglycerate mutase (247 aa).

Substrate contacts are provided by residues 8–15 (RHGESQWN), 21–22 (TG), R60, 87–90 (ERHY), K98, 114–115 (RR), and 183–184 (GN). The active-site Tele-phosphohistidine intermediate is H9. Residue E87 is the Proton donor/acceptor of the active site.

The protein belongs to the phosphoglycerate mutase family. BPG-dependent PGAM subfamily.

The enzyme catalyses (2R)-2-phosphoglycerate = (2R)-3-phosphoglycerate. It participates in carbohydrate degradation; glycolysis; pyruvate from D-glyceraldehyde 3-phosphate: step 3/5. Functionally, catalyzes the interconversion of 2-phosphoglycerate and 3-phosphoglycerate. This chain is 2,3-bisphosphoglycerate-dependent phosphoglycerate mutase, found in Chlorobium limicola (strain DSM 245 / NBRC 103803 / 6330).